The sequence spans 1595 residues: Pentafunctional AROM polypeptide (1595 aa).

Positions 1–384 (MGVPTKISIL…HEPRASTVSN (384 aa)) are 3-dehydroquinate synthase. NAD(+) contacts are provided by residues 44–46 (DTN), 81–84 (ESSK), 114–116 (GGV), and aspartate 119. Arginine 130 contacts 7-phospho-2-dehydro-3-deoxy-D-arabino-heptonate. NAD(+) is bound at residue 139-140 (TT). 7-phospho-2-dehydro-3-deoxy-D-arabino-heptonate is bound by residues aspartate 146 and lysine 152. Lysine 161 contributes to the NAD(+) binding site. Asparagine 162 contributes to the 7-phospho-2-dehydro-3-deoxy-D-arabino-heptonate binding site. NAD(+) is bound by residues 179–182 (FLNT) and asparagine 190. Glutamate 194 lines the Zn(2+) pocket. 7-phospho-2-dehydro-3-deoxy-D-arabino-heptonate is bound by residues 194–197 (EVIK) and lysine 250. The active-site Proton acceptor; for 3-dehydroquinate synthase activity is the glutamate 260. Residues 264–268 (RNLLN) and histidine 271 contribute to the 7-phospho-2-dehydro-3-deoxy-D-arabino-heptonate site. Position 271 (histidine 271) interacts with Zn(2+). Histidine 275 functions as the Proton acceptor; for 3-dehydroquinate synthase activity in the catalytic mechanism. 7-phospho-2-dehydro-3-deoxy-D-arabino-heptonate is bound by residues histidine 287 and lysine 356. Histidine 287 lines the Zn(2+) pocket. The interval 397–842 (VSPGVPKGLD…WDSLAQTFKV (446 aa)) is EPSP synthase. Residue cysteine 824 is the For EPSP synthase activity of the active site. The tract at residues 866–1057 (ASIFIIGMRG…RRKENTFFVS (192 aa)) is shikimate kinase. 872-879 (GMRGAGKT) provides a ligand contact to ATP. The 3-dehydroquinase stretch occupies residues 1058–1278 (LTLPDLGLAA…AAPGQLSARE (221 aa)). The active-site Proton acceptor; for 3-dehydroquinate dehydratase activity is the histidine 1181. Lysine 1209 acts as the Schiff-base intermediate with substrate; for 3-dehydroquinate dehydratase activity in catalysis. The tract at residues 1291–1595 (AKKFAVIGNP…MGVLPSEDIS (305 aa)) is shikimate dehydrogenase.

This sequence in the N-terminal section; belongs to the sugar phosphate cyclases superfamily. Dehydroquinate synthase family. The protein in the 2nd section; belongs to the EPSP synthase family. It in the 3rd section; belongs to the shikimate kinase family. In the 4th section; belongs to the type-I 3-dehydroquinase family. This sequence in the C-terminal section; belongs to the shikimate dehydrogenase family. As to quaternary structure, homodimer. Zn(2+) is required as a cofactor.

It localises to the cytoplasm. It catalyses the reaction 7-phospho-2-dehydro-3-deoxy-D-arabino-heptonate = 3-dehydroquinate + phosphate. The catalysed reaction is 3-dehydroquinate = 3-dehydroshikimate + H2O. The enzyme catalyses shikimate + NADP(+) = 3-dehydroshikimate + NADPH + H(+). It carries out the reaction shikimate + ATP = 3-phosphoshikimate + ADP + H(+). It catalyses the reaction 3-phosphoshikimate + phosphoenolpyruvate = 5-O-(1-carboxyvinyl)-3-phosphoshikimate + phosphate. The protein operates within metabolic intermediate biosynthesis; chorismate biosynthesis; chorismate from D-erythrose 4-phosphate and phosphoenolpyruvate: step 2/7. It functions in the pathway metabolic intermediate biosynthesis; chorismate biosynthesis; chorismate from D-erythrose 4-phosphate and phosphoenolpyruvate: step 3/7. It participates in metabolic intermediate biosynthesis; chorismate biosynthesis; chorismate from D-erythrose 4-phosphate and phosphoenolpyruvate: step 4/7. Its pathway is metabolic intermediate biosynthesis; chorismate biosynthesis; chorismate from D-erythrose 4-phosphate and phosphoenolpyruvate: step 5/7. The protein operates within metabolic intermediate biosynthesis; chorismate biosynthesis; chorismate from D-erythrose 4-phosphate and phosphoenolpyruvate: step 6/7. The AROM polypeptide catalyzes 5 consecutive enzymatic reactions in prechorismate polyaromatic amino acid biosynthesis. This Ajellomyces capsulatus (strain H143) (Darling's disease fungus) protein is Pentafunctional AROM polypeptide.